The sequence spans 127 residues: MKTSLCNYSEFKIYPARGMKFVRGDSKVFHFINTKVESLFFRKINPRDIRWSMVYRRIYKNTTTDVSAKKKARKTKKVERNIVGASLEVIQQKRAQKPEVKQAAAEQAKREIKEKKKAAAKKAAPKK.

Residues 93-127 (KRAQKPEVKQAAAEQAKREIKEKKKAAAKKAAPKK) are disordered. Over residues 115-127 (KKKAAAKKAAPKK) the composition is skewed to basic residues.

This sequence belongs to the eukaryotic ribosomal protein eL24 family.

This chain is Large ribosomal subunit protein eL24 (rpl24), found in Dictyostelium discoideum (Social amoeba).